The following is a 2410-amino-acid chain: Dual specificity protein kinase splA (2410 aa).

6 disordered regions span residues 29–48 (NNNN…NNNN), 66–103 (NHPS…GELT), 116–158 (NTQT…SNGG), 187–252 (NISP…SSGI), 508–647 (QQLQ…VPSA), and 659–820 (SSSS…KKEG). Composition is skewed to low complexity over residues 116–128 (NTQT…TSPN) and 137–158 (NTTT…SNGG). Residues 514 to 525 (QPPPTIQPPPQQ) are compositionally biased toward pro residues. A compositionally biased stretch (low complexity) spans 530–544 (LRGNRSSGNLSGLNS). Over residues 545 to 554 (FSLKQSTDSL) the composition is skewed to polar residues. Residues 560–583 (SQQSTVSSNSTPIAATPISPLTAP) show a composition bias toward low complexity. Over residues 584–594 (TSPPPPPPPPT) the composition is skewed to pro residues. Composition is skewed to low complexity over residues 595-618 (NFNS…NTTV), 627-639 (VLPK…SPRP), 659-686 (SSSS…LNIS), 701-738 (SPSY…SPSV), 746-759 (ISPN…PNIS), and 777-813 (NTNN…NNTN). B30.2/SPRY domains follow at residues 822–1004 (SSWF…GPFS) and 1020–1209 (DSGG…PPFK). Disordered stretches follow at residues 1228–1428 (PNGN…NNIY) and 1493–1512 (SLGV…PRKI). 4 stretches are compositionally biased toward low complexity: residues 1229 to 1359 (NGNN…NNNI), 1373 to 1399 (SSTG…NNSS), 1419 to 1428 (SSTNNNNNIY), and 1493 to 1507 (SLGV…SPKT). One can recognise a B30.2/SPRY 3 domain in the interval 1481 to 1703 (PITASTNHTL…CVATFPGGHF (223 aa)). Residues 1734-1798 (WAPNDVAIWL…INRLNRMIQI (65 aa)) form the SAM domain. Residues 1862–2105 (KSYTQKEIED…PPPPPQLPVR (244 aa)) form a disordered region. Basic and acidic residues predominate over residues 1865–1874 (TQKEIEDRNR). Residues 1951 to 1967 (SVSSTGGSSGFLTFPSS) are compositionally biased toward low complexity. Residues 1989-2002 (ITSNYKGITNTGQP) are compositionally biased toward polar residues. Low complexity predominate over residues 2020 to 2070 (SNNGNNGNNNNNNNNNNIKANQQQQQQSSYQQSQTQQQQQHITSTSTSTTN). Residues 2089 to 2102 (PSRPPPPPPPPPQL) are compositionally biased toward pro residues. Positions 2115-2387 (LEFGQTIGKG…FKQIIVHLKE (273 aa)) constitute a Protein kinase domain. Residues 2121–2129 (IGKGFFGEV) and K2142 contribute to the ATP site. The active-site Proton acceptor is the D2243.

This sequence belongs to the protein kinase superfamily. TKL Tyr protein kinase family. Post-translationally, tyrosine kinase domain is capable of autophosphorylation, in vitro; however it is also autophosphorylated on serine and threonine residues.

The enzyme catalyses L-tyrosyl-[protein] + ATP = O-phospho-L-tyrosyl-[protein] + ADP + H(+). Functionally, essential for spore differentiation. This Dictyostelium discoideum (Social amoeba) protein is Dual specificity protein kinase splA (splA).